The chain runs to 539 residues: Bifunctional purine biosynthesis protein PurH (539 aa).

The MGS-like domain maps to F8–T159.

Belongs to the PurH family.

The enzyme catalyses (6R)-10-formyltetrahydrofolate + 5-amino-1-(5-phospho-beta-D-ribosyl)imidazole-4-carboxamide = 5-formamido-1-(5-phospho-D-ribosyl)imidazole-4-carboxamide + (6S)-5,6,7,8-tetrahydrofolate. It catalyses the reaction IMP + H2O = 5-formamido-1-(5-phospho-D-ribosyl)imidazole-4-carboxamide. It participates in purine metabolism; IMP biosynthesis via de novo pathway; 5-formamido-1-(5-phospho-D-ribosyl)imidazole-4-carboxamide from 5-amino-1-(5-phospho-D-ribosyl)imidazole-4-carboxamide (10-formyl THF route): step 1/1. Its pathway is purine metabolism; IMP biosynthesis via de novo pathway; IMP from 5-formamido-1-(5-phospho-D-ribosyl)imidazole-4-carboxamide: step 1/1. The protein is Bifunctional purine biosynthesis protein PurH of Bartonella tribocorum (strain CIP 105476 / IBS 506).